The sequence spans 72 residues: Putative ORF1 protein (72 aa).

The protein is Putative ORF1 protein (ORF1) of Leishmania RNA virus 1 - 1 (isolate Leishmania guyanensis) (LRV-1-1).